The sequence spans 149 residues: Large ribosomal subunit protein uL15 (149 aa).

Residues 1–57 are disordered; sequence MRLNDPKPKTGSQHRRRRVGRGIAAGQGASCGFGMRGQKSRSGRPTRPGFEGGQNPL. The segment covering 23-35 has biased composition (gly residues); sequence IAAGQGASCGFGM.

It belongs to the universal ribosomal protein uL15 family. As to quaternary structure, part of the 50S ribosomal subunit.

Functionally, binds to the 23S rRNA. This is Large ribosomal subunit protein uL15 from Acaryochloris marina (strain MBIC 11017).